A 564-amino-acid polypeptide reads, in one-letter code: R-linalool synthase (564 aa).

Asp320, Asp324, Asp464, Thr468, and Glu472 together coordinate Mg(2+). The DDXXD motif motif lies at 320–324; that stretch reads DDVYD.

This sequence belongs to the terpene synthase family. Requires Mg(2+) as cofactor. It depends on Mn(2+) as a cofactor.

The catalysed reaction is (2E)-geranyl diphosphate + H2O = (R)-linalool + diphosphate. Specifically catalyzes production of (R)-(-)-linalool, the main component of lavender essential oil. This chain is R-linalool synthase, found in Lavandula angustifolia (Lavender).